A 337-amino-acid polypeptide reads, in one-letter code: MKRIAVFPSGGDAPGMNAAIRAVVRKAISEGMEVYGINRGYAGMVDGDIFPLGSKEVGDKISRGGTFLYSARYPEFAQLEGQLAGIEQLKKHGIEGVVVIGGDGSYHGAMRLTEHGFPAVGIPGTIDNDIAGTDYTIGFDTAVNTAVEAIDKLRDTSSSHGRTFVVEVMGRNAGDIALWAGIASGADQIIVPEEEFDIEKVASTIQYDFEHKGKNHHIIVLAEGVMSGEAFAQKLKEAGDKSDLRVTNLGHILRGGSPTARDRVIASWMGSHAVELLKEGKGGLAVGIHNEELVESPILGTAEEGALFSLTEEGKIIVNNPHKARLDFAALNRSLSQ.

Gly11 lines the ATP pocket. 21–25 (RAVVR) lines the ADP pocket. Residues 72–73 (RY) and 102–105 (GDGS) each bind ATP. Residue Asp103 coordinates Mg(2+). Position 125-127 (125-127 (TID)) interacts with substrate. Asp127 serves as the catalytic Proton acceptor. Residue Arg154 coordinates ADP. Substrate contacts are provided by residues Arg162 and 169–171 (MGR). Residues 185-187 (GAD), Lys212, and 214-216 (KNH) contribute to the ADP site. Residues Glu223, Arg245, and 251–254 (HILR) each bind substrate.

Belongs to the phosphofructokinase type A (PFKA) family. ATP-dependent PFK group I subfamily. Prokaryotic clade 'B1' sub-subfamily. Homotetramer. Requires Mg(2+) as cofactor.

Its subcellular location is the cytoplasm. It carries out the reaction beta-D-fructose 6-phosphate + ATP = beta-D-fructose 1,6-bisphosphate + ADP + H(+). It participates in carbohydrate degradation; glycolysis; D-glyceraldehyde 3-phosphate and glycerone phosphate from D-glucose: step 3/4. Its activity is regulated as follows. Allosterically activated by ADP and other diphosphonucleosides, and allosterically inhibited by phosphoenolpyruvate. Functionally, catalyzes the phosphorylation of D-fructose 6-phosphate to fructose 1,6-bisphosphate by ATP, the first committing step of glycolysis. The polypeptide is ATP-dependent 6-phosphofructokinase (Streptococcus pyogenes serotype M4 (strain MGAS10750)).